The chain runs to 198 residues: Crinkler effector protein BLC01 (198 aa).

Residues 1 to 15 (MMVKLICAIVDIAGA) form the signal peptide. The tract at residues 16-55 (AFPIDIDTNELVGDFKKVIKAENSRTIACDANDLRLFLAK) is LQLFLAK domain. Positions 56-113 (TDGRWLTEFEVQNGVADISVFEELDVVGAPLNMIGLSEETVSSVAITKELVKAKKTPL) are DWL domain. The short motif at 114-119 (HVLVVP) is the HVLVXXP motif element.

Belongs to the Crinkler effector family.

It is found in the secreted. It localises to the host cell. Secreted effector that elicits necrosis in host plants, a characteristic of plant innate immunity. In Bremia lactucae (Lettuce downy mildew), this protein is Crinkler effector protein BLC01.